The primary structure comprises 363 residues: MKIGVFVPIGNNGWLISTHAPQYMPTFELNKAIVQKAEHYHFDFALSMIKLRGFGGKTEFWDHNLESFTLMAGLAAVTSRIQIYATAATLTLPPAIVARMAATIDSISGGRFGVNLVTGWQKPEYEQMGIWPGDDYFSRRYDYLTEYVQVLRDLWGTGKSDFKGDFFTMNDCRVSPQPSVPMKVICAGQSDAGMAFSAQYADFNFCFGKGVNTPTAFAPTAARMKQAAEQTGRDVGSYVLFMVIADETDDAARTKWEHYKAGADEEALSWLTEQSQKDTRSGTDTNVRQMADPTSAVNINMGTLVGSYASVARMLDEVASVPGAEGVLLTFDDFLSGIETFGERIQPLMQCRAHLPTLTQEVA.

Residues 49-50, Asn-115, Glu-124, 140-141, and Ser-190 each bind FMN; these read IK and RY.

The protein belongs to the NtaA/SnaA/DszA monooxygenase family. RutA subfamily.

The enzyme catalyses uracil + FMNH2 + NADH + O2 = (Z)-3-ureidoacrylate + FMN + NAD(+) + H2O + H(+). It carries out the reaction thymine + FMNH2 + NADH + O2 = (Z)-2-methylureidoacrylate + FMN + NAD(+) + H2O + H(+). Catalyzes the pyrimidine ring opening between N-3 and C-4 by an unusual flavin hydroperoxide-catalyzed mechanism, adding oxygen atoms in the process to yield ureidoacrylate peracid, that immediately reacts with FMN forming ureidoacrylate and FMN-N(5)-oxide. The FMN-N(5)-oxide reacts spontaneously with NADH to produce FMN. Requires the flavin reductase RutF to regenerate FMN in vivo. This is Pyrimidine monooxygenase RutA from Escherichia coli O44:H18 (strain 042 / EAEC).